Here is a 505-residue protein sequence, read N- to C-terminus: Ikaros family zinc finger protein (505 aa).

4 consecutive C2H2-type zinc fingers follow at residues 18-40 (LTCE…KRSH), 46-68 (FQCN…VKLH), 74-96 (FKCS…IRTH), and 102-128 (YKCN…PGFH). Polar residues-rich tracts occupy residues 262–273 (FLNTPSPVTRSA) and 309–327 (RFQH…SQQP). Disordered stretches follow at residues 262–296 (FLNT…DIGS) and 309–440 (RFQH…VSGS). Residues 336 to 345 (ILGGSLGGIC) are compositionally biased toward gly residues. Over residues 366-377 (ATSSPSNSCPDS) the composition is skewed to polar residues. A compositionally biased stretch (low complexity) spans 393-406 (GSGSSTSRPNGSTG). A compositionally biased stretch (basic and acidic residues) spans 409–419 (HRPEMHQDNGR). The span at 424-439 (SGASDSSSLPTYNVSG) shows a compositional bias: polar residues. C2H2-type zinc fingers lie at residues 448 to 470 (YPCH…MGCH) and 476 to 500 (FECN…RGEH).

Belongs to the Ikaros C2H2-type zinc-finger protein family. Heterodimer and homodimer with other IKAROS family members. As to expression, expression is strongest in the blood, gills and intestine.

The protein localises to the nucleus. The polypeptide is Ikaros family zinc finger protein (Myxine glutinosa (Atlantic hagfish)).